We begin with the raw amino-acid sequence, 158 residues long: Cyclic pyranopterin monophosphate synthase (158 aa).

Residues Leu-75–His-77 and Met-111–Glu-112 contribute to the substrate site. The active site involves Asp-126.

Belongs to the MoaC family. In terms of assembly, homohexamer; trimer of dimers.

It carries out the reaction (8S)-3',8-cyclo-7,8-dihydroguanosine 5'-triphosphate = cyclic pyranopterin phosphate + diphosphate. The protein operates within cofactor biosynthesis; molybdopterin biosynthesis. In terms of biological role, catalyzes the conversion of (8S)-3',8-cyclo-7,8-dihydroguanosine 5'-triphosphate to cyclic pyranopterin monophosphate (cPMP). The polypeptide is Cyclic pyranopterin monophosphate synthase (Caulobacter vibrioides (strain ATCC 19089 / CIP 103742 / CB 15) (Caulobacter crescentus)).